Consider the following 289-residue polypeptide: Growth hormone-regulated TBC protein 1 (289 aa).

Residues 41–211 (LVILTKRAIK…RIWDCLFNEG (171 aa)) enclose the Rab-GAP TBC domain.

Functionally, may act as a GTPase-activating protein for Rab family protein(s). This Rattus norvegicus (Rat) protein is Growth hormone-regulated TBC protein 1 (Grtp1).